The chain runs to 307 residues: Dihydroorotate dehydrogenase A (fumarate) (307 aa).

Residues S21 and K46 to T47 contribute to the FMN site. Substrate-binding positions include K46, N70–L74, and N130. N130 provides a ligand contact to FMN. The active-site Nucleophile is C133. Positions 168 and 194 each coordinate FMN. N195–T196 lines the substrate pocket. FMN contacts are provided by residues G220, G246–G247, and G268–S269.

Belongs to the dihydroorotate dehydrogenase family. Type 1 subfamily. Homodimer. FMN is required as a cofactor.

It localises to the cytoplasm. It catalyses the reaction (S)-dihydroorotate + fumarate = orotate + succinate. It functions in the pathway pyrimidine metabolism; UMP biosynthesis via de novo pathway. In terms of biological role, catalyzes the conversion of dihydroorotate to orotate with fumarate as the electron acceptor. The sequence is that of Dihydroorotate dehydrogenase A (fumarate) (pyrD) from Lactobacillus delbrueckii subsp. bulgaricus (strain ATCC 11842 / DSM 20081 / BCRC 10696 / JCM 1002 / NBRC 13953 / NCIMB 11778 / NCTC 12712 / WDCM 00102 / Lb 14).